A 279-amino-acid polypeptide reads, in one-letter code: Probable cyclic nucleotide phosphodiesterase Psyc_2036 (279 aa).

Residues Asp-23, His-25, Asp-70, Asn-100, His-179, His-218, and His-220 each coordinate Fe cation. Residues His-25, Asp-70, and 100–101 (NH) contribute to the AMP site. His-220 contacts AMP.

Belongs to the cyclic nucleotide phosphodiesterase class-III family. Fe(2+) is required as a cofactor.

The polypeptide is Probable cyclic nucleotide phosphodiesterase Psyc_2036 (Psychrobacter arcticus (strain DSM 17307 / VKM B-2377 / 273-4)).